A 124-amino-acid polypeptide reads, in one-letter code: Type-4 ice-structuring protein (124 aa).

The first 20 residues, 1-20 (MKFSLIAAVALLALAQGSFA), serve as a signal peptide directing secretion. Position 21 is a pyrrolidone carboxylic acid (glutamine 21).

It belongs to the apolipoprotein A1/A4/E family.

It localises to the secreted. Antifreeze proteins lower the blood freezing point. The protein is Type-4 ice-structuring protein of Paralichthys olivaceus (Bastard halibut).